The following is a 166-amino-acid chain: ATP synthase subunit b 1 (166 aa).

A helical membrane pass occupies residues 7-29; it reads FWTALAFVLFFVIFGRKLWVAIT.

Belongs to the ATPase B chain family. In terms of assembly, F-type ATPases have 2 components, F(1) - the catalytic core - and F(0) - the membrane proton channel. F(1) has five subunits: alpha(3), beta(3), gamma(1), delta(1), epsilon(1). F(0) has three main subunits: a(1), b(2) and c(10-14). The alpha and beta chains form an alternating ring which encloses part of the gamma chain. F(1) is attached to F(0) by a central stalk formed by the gamma and epsilon chains, while a peripheral stalk is formed by the delta and b chains.

It localises to the cell inner membrane. F(1)F(0) ATP synthase produces ATP from ADP in the presence of a proton or sodium gradient. F-type ATPases consist of two structural domains, F(1) containing the extramembraneous catalytic core and F(0) containing the membrane proton channel, linked together by a central stalk and a peripheral stalk. During catalysis, ATP synthesis in the catalytic domain of F(1) is coupled via a rotary mechanism of the central stalk subunits to proton translocation. Its function is as follows. Component of the F(0) channel, it forms part of the peripheral stalk, linking F(1) to F(0). The protein is ATP synthase subunit b 1 of Gluconobacter oxydans (strain 621H) (Gluconobacter suboxydans).